Here is a 100-residue protein sequence, read N- to C-terminus: UPF0251 protein VVA1436 (100 aa).

The protein belongs to the UPF0251 family.

The sequence is that of UPF0251 protein VVA1436 from Vibrio vulnificus (strain YJ016).